The chain runs to 203 residues: uncharacterized protein (203 aa).

This is an uncharacterized protein from Haemophilus influenzae (strain ATCC 51907 / DSM 11121 / KW20 / Rd).